Consider the following 522-residue polypeptide: Leucine-rich repeat transmembrane neuronal protein 1 (522 aa).

The N-terminal stretch at 1-34 (MDFLLLGLCLYWLLRRPSGVVLCLLGACFQMLPA) is a signal peptide. Residues 35–63 (APSGCPQLCRCEGRLLYCEALNLTEAPHN) enclose the LRRNT domain. The Extracellular portion of the chain corresponds to 35-427 (APSGCPQLCR…HAENAVQIHK (393 aa)). Residues Asn56 and Asn63 are each glycosylated (N-linked (GlcNAc...) asparagine). LRR repeat units follow at residues 64–87 (LSGL…QFTG), 89–111 (MQLT…AFQK), 112–135 (LRRV…TFRP), 137–159 (PNLR…LFHG), 161–183 (RKLT…IFQD), 184–207 (CRSL…SFAG), 209–231 (FKLT…HFPR), 233–255 (ISLH…LDWV), 256–278 (WNLE…VFET), and 279–302 (VPHL…ILNS). Asn130 carries N-linked (GlcNAc...) asparagine glycosylation. One can recognise an LRRCT domain in the interval 314-365 (NLWDCGRNVCALASWLNNFQGRYDGNLQCASPEYAQGEDVLDAVYAFHLCED). N-linked (GlcNAc...) asparagine glycosylation is present at Asn380. Positions 382-401 (SDLGPPASSATTLADGGEGQ) are disordered. Residues 428-448 (VVTGTMALIFSFLIVVLVLYV) traverse the membrane as a helical segment. Topologically, residues 449–522 (SWKCFPASLR…HQQPARECEV (74 aa)) are cytoplasmic.

Belongs to the LRRTM family. Predominantly expressed in forebrain regions including thalamus and cerebral cortex.

It is found in the cell membrane. The protein localises to the postsynaptic cell membrane. In terms of biological role, exhibits strong synaptogenic activity, restricted to excitatory presynaptic differentiation, acting at both pre- and postsynaptic level. The sequence is that of Leucine-rich repeat transmembrane neuronal protein 1 (LRRTM1) from Homo sapiens (Human).